The primary structure comprises 313 residues: uncharacterized protein (313 aa).

2 helical membrane passes run 42-64 and 74-96; these read LVVL…LFLT and VRAY…TLYV.

Its subcellular location is the cell membrane. This is an uncharacterized protein from Treponema pallidum (strain Nichols).